The sequence spans 816 residues: Phosphatidylinositol 4-kinase beta (816 aa).

Disordered stretches follow at residues Met1–Leu30, Glu101–Arg120, and Arg250–Ser318. An N-acetylglycine modification is found at Gly2. The interaction with ACBD3 stretch occupies residues Gly2–Ile68. Over residues Thr10–Leu30 the composition is skewed to low complexity. Positions Cys52–Ser242 constitute a PIK helical domain. Phosphoserine is present on Ser258. Position 263 is a phosphothreonine (Thr263). Phosphoserine is present on residues Ser266, Ser275, Ser277, Ser284, and Ser294. 2 stretches are compositionally biased toward polar residues: residues Asp278 to Lys297 and Ser306 to Ser318. Residue Ser428 is modified to Phosphoserine. Phosphothreonine is present on Thr438. Ser511 is modified (phosphoserine). Thr517 and Thr519 each carry phosphothreonine. The region spanning Glu535 to Thr801 is the PI3K/PI4K catalytic domain. A G-loop region spans residues Val541–Gly547. The interval Gln668–Asn676 is catalytic loop. An activation loop region spans residues His687–Thr711.

It belongs to the PI3/PI4-kinase family. Type III PI4K subfamily. Interacts with ARF1 and ARF3 in the Golgi complex, but not with ARF4, ARF5 or ARF6. Interacts with NCS1/FREQ in a calcium-independent manner. Interacts with CALN1/CABP8 and CALN2/CABP7; in a calcium-dependent manner; this interaction competes with NCS1/FREQ binding. Interacts with ACBD3. Interacts with ARMH3, YWHAB, YWHAE, YWHAG, YWHAH, YWHAQ, YWHAZ and SFN. Interacts with GGA2 (via VHS domain); the interaction is important for PI4KB location at the Golgi apparatus membrane. Interacts with ATG9A. Mg(2+) is required as a cofactor. It depends on Mn(2+) as a cofactor.

The protein resides in the endomembrane system. Its subcellular location is the mitochondrion outer membrane. It is found in the rough endoplasmic reticulum membrane. The protein localises to the golgi apparatus. It localises to the golgi apparatus membrane. It catalyses the reaction a 1,2-diacyl-sn-glycero-3-phospho-(1D-myo-inositol) + ATP = a 1,2-diacyl-sn-glycero-3-phospho-(1D-myo-inositol 4-phosphate) + ADP + H(+). Inhibited by wortmannin. Increased kinase activity upon interaction with NCS1/FREQ. Its function is as follows. Phosphorylates phosphatidylinositol (PI) in the first committed step in the production of the second messenger inositol-1,4,5,-trisphosphate (PIP). May regulate Golgi disintegration/reorganization during mitosis, possibly via its phosphorylation. Involved in Golgi-to-plasma membrane trafficking. May play an important role in the inner ear development. In Mus musculus (Mouse), this protein is Phosphatidylinositol 4-kinase beta (Pi4kb).